The following is a 431-amino-acid chain: Histidinol dehydrogenase (431 aa).

NAD(+) is bound by residues Y127, Q189, and N212. Substrate-binding residues include S237, Q259, and H262. The Zn(2+) site is built by Q259 and H262. Residues E326 and H327 each act as proton acceptor in the active site. Substrate-binding residues include H327, D360, E414, and H419. Position 360 (D360) interacts with Zn(2+). H419 is a Zn(2+) binding site.

It belongs to the histidinol dehydrogenase family. Zn(2+) serves as cofactor.

It catalyses the reaction L-histidinol + 2 NAD(+) + H2O = L-histidine + 2 NADH + 3 H(+). It functions in the pathway amino-acid biosynthesis; L-histidine biosynthesis; L-histidine from 5-phospho-alpha-D-ribose 1-diphosphate: step 9/9. Catalyzes the sequential NAD-dependent oxidations of L-histidinol to L-histidinaldehyde and then to L-histidine. This chain is Histidinol dehydrogenase, found in Xanthomonas axonopodis pv. citri (strain 306).